A 641-amino-acid chain; its full sequence is uncharacterized protein (641 aa).

Residue S112 is modified to Phosphoserine. Disordered regions lie at residues S118–T243, K261–I289, D355–A386, and D404–S430. Polar residues predominate over residues A132–G162. Phosphoserine is present on S198. Composition is skewed to polar residues over residues N222–N234 and R278–I289. Residues D355 to R368 show a composition bias toward basic and acidic residues. Low complexity-rich tracts occupy residues R374–R383 and S421–S430.

This is an uncharacterized protein from Mus musculus (Mouse).